Consider the following 80-residue polypeptide: Defensin-like protein 46 (80 aa).

Positions 1-27 (MGSTKTLVTCFLTIILAVSLSNHNVLA) are cleaved as a signal peptide. 4 disulfide bridges follow: Cys40/Cys78, Cys44/Cys65, Cys50/Cys76, and Cys54/Cys77.

This sequence belongs to the DEFL family.

Its subcellular location is the secreted. The protein is Defensin-like protein 46 of Arabidopsis thaliana (Mouse-ear cress).